A 269-amino-acid chain; its full sequence is MIISFVNNKGGVLKTTMATNVAGSLVKLCPERRKVILDLDGQGNVSASFGQNPERLNNTLIDILLKVPKFSGSNNFIEIDDCLLSVYEGLDILPCNFELNFADIDISRKKYKASDIAEIVKQLAKRYEFVLLDTPPNMATLVSTAMSLSDVIVIPFEPDQYSMLGLMRIVETIDTFKEKNTNLKTILVPTKVNVRTRLHNEVIDLAKTKAKKNNVAFSKNFVSLTSKSSAAVGYEKLPISLVSSPSKKYLNEYLEITKEILNLANYNVH.

It belongs to the ParA family.

The sequence is that of ParA family protein MG470 from Mycoplasma genitalium (strain ATCC 33530 / DSM 19775 / NCTC 10195 / G37) (Mycoplasmoides genitalium).